The sequence spans 94 residues: Acylphosphatase (94 aa).

In terms of domain architecture, Acylphosphatase-like spans 7–94 (AVQARVYGRV…TAPGDFRIVA (88 aa)). Residues Arg22 and Asn40 contribute to the active site.

The protein belongs to the acylphosphatase family.

It catalyses the reaction an acyl phosphate + H2O = a carboxylate + phosphate + H(+). The protein is Acylphosphatase (acyP) of Mesorhizobium japonicum (strain LMG 29417 / CECT 9101 / MAFF 303099) (Mesorhizobium loti (strain MAFF 303099)).